Reading from the N-terminus, the 295-residue chain is sn-glycerol-3-phosphate transport system permease protein UgpA (295 aa).

Residues 1–11 (MSSFRPVFRSR) are Cytoplasmic-facing. Residues 12-32 (WLPYLLVAPQLVITVIFFIWP) form a helical membrane-spanning segment. Over 33–80 (AGEALWYSLQSVDPFGFSSQFVGLENFVALFHDSYYLDAFWTTIKFSA) the chain is Periplasmic. The region spanning 76–284 (IKFSALVTFS…FLVIILTVVQ (209 aa)) is the ABC transmembrane type-1 domain. The helical transmembrane segment at 81–101 (LVTFSGLLVSLFFAALVDYVV) threads the bilayer. The Cytoplasmic portion of the chain corresponds to 102 to 109 (RGSRFYQT). Residues 110–130 (LMLLPYAVAPAVAAVLWIFLF) form a helical membrane-spanning segment. The Periplasmic portion of the chain corresponds to 131–157 (NPGRGLITHFLGEFGYDWNHAQNSGQA). Residues 158–178 (MFLVVFASVWKQISYNFLFFF) traverse the membrane as a helical segment. At 179-207 (AALQSIPRSLVEAAAIDGAGPIRRFFRLS) the chain is on the cytoplasmic side. Residues 208-228 (LPLIAPVSFFLLVVNLVYAFF) traverse the membrane as a helical segment. At 229 to 262 (DTFPVIDAATAGGPVQATTTLIYKIYREGFTGLD) the chain is on the periplasmic side. Residues 263–283 (LSASAAQSVVLMFLVIILTVV) traverse the membrane as a helical segment. Residues 284–295 (QFRYVESKVRYQ) lie on the Cytoplasmic side of the membrane.

The protein belongs to the binding-protein-dependent transport system permease family. UgpAE subfamily. The complex is composed of two ATP-binding proteins (UgpC), two transmembrane proteins (UgpA and UgpE) and a solute-binding protein (UgpB).

It localises to the cell inner membrane. Part of the ABC transporter complex UgpBAEC involved in sn-glycerol-3-phosphate (G3P) import. Probably responsible for the translocation of the substrate across the membrane. The chain is sn-glycerol-3-phosphate transport system permease protein UgpA (ugpA) from Salmonella choleraesuis (strain SC-B67).